A 231-amino-acid chain; its full sequence is Transmembrane protein 225 (231 aa).

Residues 1-13 (MMRIPNRSIQAAN) are Cytoplasmic-facing. Residues 14–34 (IFFSSGAILLLIAGLIMENWV) traverse the membrane as a helical segment. The Extracellular segment spans residues 35–71 (ELIPKVRKDKVTHSPWLGCCPPFWPEESLEAIRRMMM). Residues 72–92 (MSLNISIYLNLIIGLQFTYMI) traverse the membrane as a helical segment. Residues 93-99 (SQNKCVH) lie on the Cytoplasmic side of the membrane. A helical transmembrane segment spans residues 100 to 120 (LLIGFLSFFTGCLLFYAIIVY). Over 121 to 139 (HHKLNKGQYVYFVNYKTKW) the chain is Extracellular. Residues 140–160 (IVFTIYLTIALFLTCGIFSFI) traverse the membrane as a helical segment. Residues 161 to 231 (QCTNRCACMK…LQSRRVTWAL (71 aa)) lie on the Cytoplasmic side of the membrane. The short motif at 225-229 (RRVTW) is the RVxF element.

In terms of assembly, interacts (via RVxF motif) with PPP1CC. Expressed in testis, specifically in spermatocytes and round spermatids.

It is found in the cytoplasmic vesicle. Its subcellular location is the secretory vesicle. The protein resides in the acrosome membrane. Probably inhibits protein phosphatase 1 (PP1) in sperm via binding to catalytic subunit PPP1CC. The sequence is that of Transmembrane protein 225 (Tmem225) from Rattus norvegicus (Rat).